The sequence spans 195 residues: Protein A43 (195 aa).

The signal sequence occupies residues Met-1 to Ser-21. The Extracellular segment spans residues Ser-23–Asp-166. Residues Asn-66 and Asn-115 are each glycosylated (N-linked (GlcNAc...) asparagine; by host). The helical transmembrane segment at Ile-167–Val-187 threads the bilayer. Residues Phe-188–Ser-195 are Cytoplasmic-facing.

Belongs to the orthopoxvirus OPG172 protein family.

It localises to the host membrane. Its subcellular location is the host cell surface. This chain is Protein A43 (OPG172), found in Homo sapiens (Human).